The primary structure comprises 183 residues: Translation initiation factor IF-3 (183 aa).

It belongs to the IF-3 family. In terms of assembly, monomer.

The protein resides in the cytoplasm. In terms of biological role, IF-3 binds to the 30S ribosomal subunit and shifts the equilibrium between 70S ribosomes and their 50S and 30S subunits in favor of the free subunits, thus enhancing the availability of 30S subunits on which protein synthesis initiation begins. This chain is Translation initiation factor IF-3, found in Pseudomonas syringae pv. tomato (strain ATCC BAA-871 / DC3000).